Consider the following 119-residue polypeptide: MAFKDPGKAPVDQEVAIHRIRITLTSRNVKSLEKVCADLIRGAKEKNLKVKGPVRMPTKTLRITTRKTPCGEGSKTWDRFQMRIHKRLIDLHSPSEIVKQITSISIEPGVEVEVTIADA.

This sequence belongs to the universal ribosomal protein uS10 family. As to quaternary structure, component of the 40S small ribosomal subunit.

Its subcellular location is the cytoplasm. Functionally, component of the small ribosomal subunit. The ribosome is a large ribonucleoprotein complex responsible for the synthesis of proteins in the cell. The protein is Small ribosomal subunit protein uS10 (rps20) of Xenopus laevis (African clawed frog).